A 186-amino-acid chain; its full sequence is Large ribosomal subunit protein uL10 (186 aa).

It belongs to the universal ribosomal protein uL10 family. In terms of assembly, part of the ribosomal stalk of the 50S ribosomal subunit. The N-terminus interacts with L11 and the large rRNA to form the base of the stalk. The C-terminus forms an elongated spine to which L12 dimers bind in a sequential fashion forming a multimeric L10(L12)X complex.

Functionally, forms part of the ribosomal stalk, playing a central role in the interaction of the ribosome with GTP-bound translation factors. In Roseiflexus sp. (strain RS-1), this protein is Large ribosomal subunit protein uL10.